The primary structure comprises 579 residues: CTP synthase (579 aa).

The segment at 1–281 is amidoligase domain; that stretch reads MPALRKHPQT…DAYVVRRLNL (281 aa). Position 23 (S23) interacts with CTP. Residue S23 coordinates UTP. Residues 24 to 29 and D81 each bind ATP; that span reads SLGKGL. Residues D81 and E155 each contribute to the Mg(2+) site. Residues 162–164, 202–207, and K238 contribute to the CTP site; these read DIE and KTKPTQ. Residues 202–207 and K238 each bind UTP; that span reads KTKPTQ. Residues 306–554 enclose the Glutamine amidotransferase type-1 domain; sequence RIALVGKYID…IGAALDYKAA (249 aa). Residue G369 participates in L-glutamine binding. C396 acts as the Nucleophile; for glutamine hydrolysis in catalysis. L-glutamine-binding positions include 397–400, E419, and R480; that span reads LGLQ. Residues H527 and E529 contribute to the active site.

Belongs to the CTP synthase family. As to quaternary structure, homotetramer.

It carries out the reaction UTP + L-glutamine + ATP + H2O = CTP + L-glutamate + ADP + phosphate + 2 H(+). It catalyses the reaction L-glutamine + H2O = L-glutamate + NH4(+). The enzyme catalyses UTP + NH4(+) + ATP = CTP + ADP + phosphate + 2 H(+). It functions in the pathway pyrimidine metabolism; CTP biosynthesis via de novo pathway; CTP from UDP: step 2/2. With respect to regulation, allosterically activated by GTP, when glutamine is the substrate; GTP has no effect on the reaction when ammonia is the substrate. The allosteric effector GTP functions by stabilizing the protein conformation that binds the tetrahedral intermediate(s) formed during glutamine hydrolysis. Inhibited by the product CTP, via allosteric rather than competitive inhibition. Its function is as follows. Catalyzes the ATP-dependent amination of UTP to CTP with either L-glutamine or ammonia as the source of nitrogen. Regulates intracellular CTP levels through interactions with the four ribonucleotide triphosphates. This is CTP synthase from Mycobacterium sp. (strain JLS).